The sequence spans 270 residues: Phosphonates import ATP-binding protein PhnC (270 aa).

The ABC transporter domain occupies 2–245 (LVIEGLTCRF…IARELYDLEA (244 aa)). 34-41 (GRSGAGKS) lines the ATP pocket.

This sequence belongs to the ABC transporter superfamily. Phosphonates importer (TC 3.A.1.9.1) family. The complex is composed of two ATP-binding proteins (PhnC), two transmembrane proteins (PhnE) and a solute-binding protein (PhnD).

Its subcellular location is the cell inner membrane. It carries out the reaction phosphonate(out) + ATP + H2O = phosphonate(in) + ADP + phosphate + H(+). Functionally, part of the ABC transporter complex PhnCDE involved in phosphonates import. Responsible for energy coupling to the transport system. The chain is Phosphonates import ATP-binding protein PhnC from Rhodopseudomonas palustris (strain BisB5).